Here is a 489-residue protein sequence, read N- to C-terminus: Arginine biosynthesis bifunctional protein ArgJ 2, mitochondrial (489 aa).

A mitochondrion-targeting transit peptide spans 1–11; it reads MLLISRIGARH. Residues threonine 205, lysine 234, threonine 245, glutamate 341, and asparagine 484 each coordinate substrate. Threonine 245 (nucleophile) is an active-site residue.

The protein belongs to the ArgJ family. As to quaternary structure, heterodimer of an alpha and a beta chain. In terms of processing, the alpha and beta chains are autoproteolytically processed from a single precursor protein within the mitochondrion.

It localises to the mitochondrion matrix. It catalyses the reaction N(2)-acetyl-L-ornithine + L-glutamate = N-acetyl-L-glutamate + L-ornithine. The catalysed reaction is L-glutamate + acetyl-CoA = N-acetyl-L-glutamate + CoA + H(+). It participates in amino-acid biosynthesis; L-arginine biosynthesis; L-ornithine and N-acetyl-L-glutamate from L-glutamate and N(2)-acetyl-L-ornithine (cyclic): step 1/1. It functions in the pathway amino-acid biosynthesis; L-arginine biosynthesis; N(2)-acetyl-L-ornithine from L-glutamate: step 1/4. Its function is as follows. Catalyzes two activities which are involved in the cyclic version of arginine biosynthesis: the synthesis of acetylglutamate from glutamate and acetyl-CoA, and of ornithine by transacetylation between acetylornithine and glutamate. The protein is Arginine biosynthesis bifunctional protein ArgJ 2, mitochondrial of Sclerotinia sclerotiorum (strain ATCC 18683 / 1980 / Ss-1) (White mold).